Reading from the N-terminus, the 571-residue chain is UvrABC system protein C (571 aa).

Residues 15-93 (TSPGVYLWKD…IDRYNPEFNI (79 aa)) form the GIY-YIG domain. Residues 184-219 (NNYINELTNKMHQAANNMQFELALFLRDGLTYLKKL) enclose the UVR domain.

Belongs to the UvrC family. In terms of assembly, interacts with UvrB in an incision complex.

The protein localises to the cytoplasm. Functionally, the UvrABC repair system catalyzes the recognition and processing of DNA lesions. UvrC both incises the 5' and 3' sides of the lesion. The N-terminal half is responsible for the 3' incision and the C-terminal half is responsible for the 5' incision. The polypeptide is UvrABC system protein C (Mycoplasmopsis bovis (strain ATCC 25523 / DSM 22781 / NCTC 10131 / PG45) (Mycoplasma bovis)).